We begin with the raw amino-acid sequence, 565 residues long: Atlastin-2 (565 aa).

Residues 1-458 (MVLKKGVKFF…NIFYAARTPA (458 aa)) are Cytoplasmic-facing. Residues 73–318 (DLNIVVVSVA…LVPLLLAPEN (246 aa)) enclose the GB1/RHD3-type G domain. Residues R86, K87, G88, K89, S90, F91, Q157, R226, and D227 each coordinate GDP. Residues R86, K87, G88, K89, S90, and F91 each coordinate GTP. Residue S90 coordinates Mg(2+). R226 and D227 together coordinate GTP. The stretch at 238 to 266 (LEGGKQFLEKRLQVKKNQHEELQNVRKHI) forms a coiled coil. K252 bears the N6-methyllysine mark. The GDP site is built by V285 and N288. Residue V285 participates in GTP binding. The interval 356–447 (MLQATAEANN…YANFIKHNDG (92 aa)) is 3HB (three-helix bundle) domain. The linker stretch occupies residues 448 to 456 (KNIFYAART). A helical membrane pass occupies residues 459-479 (TLFAVMFAMYIISGLTGFIGL). Over 480–481 (NS) the chain is Lumenal. A helical transmembrane segment spans residues 482 to 502 (IAVLCNLVMGLALTFLCTWAY). The Cytoplasmic segment spans residues 503 to 565 (VKYSGEFREI…VSHHARLKTD (63 aa)). Positions 529–565 (KPLGDNLMEENIRQSVTNSIKAGLTDQVSHHARLKTD) are autoinhibitory domain.

The protein belongs to the TRAFAC class dynamin-like GTPase superfamily. GB1/RHD3 GTPase family. GB1 subfamily. Monomeric and homodimeric. The homodimer, transiently formed by two molecules on opposing membranes, is the active form mediating ER membrane fusion. Interacts with REEP5 and RTN3; these proteins are involved in endoplasmic reticulum tubular network organization. Interacts with ZFYVE27; both proteins are involved in endoplasmic reticulum tubular network organization.

It localises to the endoplasmic reticulum membrane. It catalyses the reaction GTP + H2O = GDP + phosphate + H(+). Functionally, atlastin-2 (ATL2) is a membrane-anchored GTPase that mediates the GTP-dependent fusion of endoplasmic reticulum (ER) membranes, maintaining the continuous ER network. It facilitates the formation of three-way junctions where ER tubules intersect. Two atlastin-2 on neighboring ER tubules bind GTP and form loose homodimers through the GB1/RHD3-type G domains and 3HB regions. Upon GTP hydrolysis, the 3HB regions tighten, pulling the membranes together to drive their fusion. After fusion, the homodimer disassembles upon release of inorganic phosphate (Pi). Subsequently, GDP dissociates, resetting the monomers to a conformation ready for a new fusion cycle. This is Atlastin-2 from Macaca fascicularis (Crab-eating macaque).